The sequence spans 276 residues: Adenylyl-sulfate kinase 1, chloroplastic (276 aa).

Residues 1-38 (MIAAGAKSLLGLSMASPKGIFDSNSMSNSRSVVVVRAC) constitute a chloroplast transit peptide. The segment at 46–74 (TLSHNKNGSIPEVKSINGHTGQKQGPLST) is disordered. The span at 62 to 74 (NGHTGQKQGPLST) shows a compositional bias: polar residues. Residue 108–116 (GLSGSGKST) coordinates ATP. Substrate contacts are provided by residues Asp138, Arg141, Arg155, Asn158, 181 to 182 (IS), and Gly231. Ser182 serves as the catalytic Phosphoserine intermediate.

This sequence belongs to the APS kinase family. Homodimer; disulfide-linked. Interacts with APK2. In terms of tissue distribution, expressed in root vasculature, root tips, leaf epidermal and guard cells, pollen grains and funiculus of developing seeds.

Its subcellular location is the plastid. It localises to the chloroplast. The catalysed reaction is adenosine 5'-phosphosulfate + ATP = 3'-phosphoadenylyl sulfate + ADP + H(+). It functions in the pathway sulfur metabolism; hydrogen sulfide biosynthesis; sulfite from sulfate: step 2/3. In terms of biological role, catalyzes the synthesis of activated sulfate. Essential for plant reproduction and viability. Required for the production of glucosinolates. This is Adenylyl-sulfate kinase 1, chloroplastic (APK1) from Arabidopsis thaliana (Mouse-ear cress).